A 559-amino-acid polypeptide reads, in one-letter code: Acetylcholinesterase-1 (559 aa).

Positions 1 to 21 are cleaved as a signal peptide; that stretch reads MMLPRCFVTVLLMSSVLYIGG. Cysteines 92 and 114 form a disulfide. A substrate-binding site is contributed by 142-143; that stretch reads GG. The Acyl-ester intermediate role is filled by Ser-223. Ser-223 carries the post-translational modification Phosphoserine. Residues Cys-276 and Cys-293 are joined by a disulfide bond. Residues Asn-278 and Asn-342 are each glycosylated (N-linked (GlcNAc...) asparagine). Glu-354 acts as the Charge relay system in catalysis. An N-linked (GlcNAc...) asparagine glycan is attached at Asn-374. Cys-432 and Cys-550 are joined by a disulfide. His-471 functions as the Charge relay system in the catalytic mechanism.

It belongs to the type-B carboxylesterase/lipase family. Expressed by the venom gland.

It localises to the secreted. The enzyme catalyses acetylcholine + H2O = choline + acetate + H(+). In terms of biological role, terminates signal transduction at the neuromuscular junction by rapid hydrolysis of the acetylcholine released into the synaptic cleft. The protein is Acetylcholinesterase-1 of Trittame loki (Brush-footed trapdoor spider).